The chain runs to 292 residues: Formamidopyrimidine-DNA glycosylase (292 aa).

P2 serves as the catalytic Schiff-base intermediate with DNA. The active-site Proton donor is E3. The Proton donor; for beta-elimination activity role is filled by K60. Positions 109, 128, and 173 each coordinate DNA. The FPG-type zinc finger occupies 258 to 292; that stretch reads NVYRRTGRECRKCGNLIERQKITGRSTHWCPNCQK. The Proton donor; for delta-elimination activity role is filled by R282.

It belongs to the FPG family. Monomer. Zn(2+) is required as a cofactor.

It catalyses the reaction Hydrolysis of DNA containing ring-opened 7-methylguanine residues, releasing 2,6-diamino-4-hydroxy-5-(N-methyl)formamidopyrimidine.. It carries out the reaction 2'-deoxyribonucleotide-(2'-deoxyribose 5'-phosphate)-2'-deoxyribonucleotide-DNA = a 3'-end 2'-deoxyribonucleotide-(2,3-dehydro-2,3-deoxyribose 5'-phosphate)-DNA + a 5'-end 5'-phospho-2'-deoxyribonucleoside-DNA + H(+). Involved in base excision repair of DNA damaged by oxidation or by mutagenic agents. Acts as a DNA glycosylase that recognizes and removes damaged bases. Has a preference for oxidized purines, such as 7,8-dihydro-8-oxoguanine (8-oxoG). Has AP (apurinic/apyrimidinic) lyase activity and introduces nicks in the DNA strand. Cleaves the DNA backbone by beta-delta elimination to generate a single-strand break at the site of the removed base with both 3'- and 5'-phosphates. In Prochlorococcus marinus (strain MIT 9301), this protein is Formamidopyrimidine-DNA glycosylase.